An 89-amino-acid chain; its full sequence is SAP domain-containing new25 (89 aa).

One can recognise an SAP domain in the interval 44–78; sequence PSQWSKKQLIEYCKKNSLKTSGSHEELVIRVQNHL.

This chain is SAP domain-containing new25 (new25), found in Schizosaccharomyces pombe (strain 972 / ATCC 24843) (Fission yeast).